Consider the following 95-residue polypeptide: ESAT-6-like protein EsxA (95 aa).

Belongs to the WXG100 family. ESAT-6 subfamily. Forms a tight 1:1 complex with EsxB. An artificial EsxA-EsxB heterodimer interacts with EspA.

The protein localises to the secreted. Its function is as follows. An exported protein. Unlike its M.tuberculosis counterpart has poor pore forming ability in artificial liposomes, does not undergo conformational change at acidic pH. Mutation of 2 residues to those found in M.tuberculosis (25-TA-26 to IH) alters the properties of this protein so that it inserts into liposomes at acidic pH, forming pores, like its M.tuberculosis counterpart. The sequence is that of ESAT-6-like protein EsxA from Mycolicibacterium smegmatis (strain ATCC 700084 / mc(2)155) (Mycobacterium smegmatis).